The primary structure comprises 597 residues: Membrane protein insertase YidC (597 aa).

The helical transmembrane segment at Tyr8–Ser28 threads the bilayer. The segment at Ala38–Ser75 is disordered. The segment covering Ala41–Pro70 has biased composition (low complexity). A run of 4 helical transmembrane segments spans residues Leu372–Phe392, Trp446–Ile466, Leu491–Val511, and Phe535–Ile555.

This sequence belongs to the OXA1/ALB3/YidC family. Type 1 subfamily. Interacts with the Sec translocase complex via SecD. Specifically interacts with transmembrane segments of nascent integral membrane proteins during membrane integration.

The protein localises to the cell inner membrane. In terms of biological role, required for the insertion and/or proper folding and/or complex formation of integral membrane proteins into the membrane. Involved in integration of membrane proteins that insert both dependently and independently of the Sec translocase complex, as well as at least some lipoproteins. Aids folding of multispanning membrane proteins. The protein is Membrane protein insertase YidC of Sinorhizobium medicae (strain WSM419) (Ensifer medicae).